We begin with the raw amino-acid sequence, 799 residues long: Rho GTPase-activating protein gacI (799 aa).

In terms of domain architecture, Rho-GAP spans 226–451 (IKLEEVFARE…LLVEHVLTIF (226 aa)). Positions 472–520 (RSQSDISSQTKPLPSLPTSPQNRSAIITGDSSSPSLNTPPVKSSLNSSD) are enriched in polar residues. 2 disordered regions span residues 472–572 (RSQS…PTSN) and 741–799 (EKQQ…LSNQ). Residues 525-549 (DNGSNNNNNNNTTNTITNNGIADTA) show a composition bias toward low complexity. The span at 550 to 568 (TPPPPTTPTAPTTPPPPTT) shows a compositional bias: pro residues. Low complexity-rich tracts occupy residues 743–752 (QQQQQQQQTN) and 759–791 (ISSNTNTSISGDNSENGDSLNSSTSNQSPLNSS).

It localises to the cytoplasm. Functionally, rho GTPase-activating protein involved in the signal transduction pathway. In Dictyostelium discoideum (Social amoeba), this protein is Rho GTPase-activating protein gacI (gacI).